The following is a 489-amino-acid chain: Rhamnulokinase (489 aa).

Residue 13–17 (ASSGR) participates in ATP binding. Cys68 and Cys222 are oxidised to a cystine. Substrate-binding positions include Gly83 and 236 to 238 (HDT). Residue Asp237 is the Proton acceptor of the active site. Thr259 is a binding site for ATP. Asn296 contributes to the substrate binding site. Gln304 is a binding site for ATP. Cys353 and Cys370 are joined by a disulfide. Residue Gly402 coordinates ATP. A disulfide bond links Cys413 and Cys417.

Belongs to the rhamnulokinase family. As to quaternary structure, monomer. It depends on Mg(2+) as a cofactor.

It carries out the reaction L-rhamnulose + ATP = L-rhamnulose 1-phosphate + ADP + H(+). The protein operates within carbohydrate degradation; L-rhamnose degradation; glycerone phosphate from L-rhamnose: step 2/3. Involved in the catabolism of L-rhamnose (6-deoxy-L-mannose). Catalyzes the transfer of the gamma-phosphate group from ATP to the 1-hydroxyl group of L-rhamnulose to yield L-rhamnulose 1-phosphate. The polypeptide is Rhamnulokinase (Escherichia fergusonii (strain ATCC 35469 / DSM 13698 / CCUG 18766 / IAM 14443 / JCM 21226 / LMG 7866 / NBRC 102419 / NCTC 12128 / CDC 0568-73)).